A 59-amino-acid chain; its full sequence is uncharacterized protein (59 aa).

This is an uncharacterized protein from Haemophilus influenzae (strain ATCC 51907 / DSM 11121 / KW20 / Rd).